The following is a 538-amino-acid chain: Chaperonin GroEL (538 aa).

Residues 29–32, 86–90, Gly-413, 479–481, and Asp-495 each bind ATP; these read TLGP, DGTTT, and DAL.

The protein belongs to the chaperonin (HSP60) family. Forms a cylinder of 14 subunits composed of two heptameric rings stacked back-to-back. Interacts with the co-chaperonin GroES.

It is found in the cytoplasm. The catalysed reaction is ATP + H2O + a folded polypeptide = ADP + phosphate + an unfolded polypeptide.. Its function is as follows. Together with its co-chaperonin GroES, plays an essential role in assisting protein folding. The GroEL-GroES system forms a nano-cage that allows encapsulation of the non-native substrate proteins and provides a physical environment optimized to promote and accelerate protein folding. The protein is Chaperonin GroEL of Thermotoga petrophila (strain ATCC BAA-488 / DSM 13995 / JCM 10881 / RKU-1).